The primary structure comprises 239 residues: tRNA (guanine-N(1)-)-methyltransferase (239 aa).

S-adenosyl-L-methionine is bound by residues Gly109 and 128–133; that span reads IGDYVL.

The protein belongs to the RNA methyltransferase TrmD family. As to quaternary structure, homodimer.

Its subcellular location is the cytoplasm. It carries out the reaction guanosine(37) in tRNA + S-adenosyl-L-methionine = N(1)-methylguanosine(37) in tRNA + S-adenosyl-L-homocysteine + H(+). In terms of biological role, specifically methylates guanosine-37 in various tRNAs. In Thermus thermophilus (strain ATCC 27634 / DSM 579 / HB8), this protein is tRNA (guanine-N(1)-)-methyltransferase.